The primary structure comprises 158 residues: uncharacterized protein (158 aa).

The segment at 77-132 (AIKRNKIGGSKRSEVHSNRSKNYSSKKFRSQKCRRSRQKKRQNKKPNNSRFISSNK) is disordered. Positions 100 to 120 (SSKKFRSQKCRRSRQKKRQNK) are enriched in basic residues.

This is an uncharacterized protein from Acanthamoeba polyphaga mimivirus (APMV).